Reading from the N-terminus, the 242-residue chain is ATP synthase subunit a (242 aa).

6 helical membrane passes run 29-49, 84-104, 114-134, 140-160, 189-209, and 210-230; these read SSIY…LAFY, FIPL…LGMT, IIVT…VGFI, FLTL…MIVI, VIAS…IPLM, and VILI…FTIL.

It belongs to the ATPase A chain family. F-type ATPases have 2 components, CF(1) - the catalytic core - and CF(0) - the membrane proton channel. CF(1) has five subunits: alpha(3), beta(3), gamma(1), delta(1), epsilon(1). CF(0) has three main subunits: a(1), b(2) and c(9-12). The alpha and beta chains form an alternating ring which encloses part of the gamma chain. CF(1) is attached to CF(0) by a central stalk formed by the gamma and epsilon chains, while a peripheral stalk is formed by the delta and b chains.

It localises to the cell inner membrane. In terms of biological role, key component of the proton channel; it plays a direct role in the translocation of protons across the membrane. The sequence is that of ATP synthase subunit a from Rickettsia prowazekii (strain Madrid E).